The following is a 145-amino-acid chain: Small ribosomal subunit protein eS19 (145 aa).

It belongs to the eukaryotic ribosomal protein eS19 family. Component of the small ribosomal subunit.

It localises to the cytoplasm. The protein localises to the nucleus. In terms of biological role, component of the small ribosomal subunit. The ribosome is a large ribonucleoprotein complex responsible for the synthesis of proteins in the cell. Required for pre-rRNA processing and maturation of 40S ribosomal subunits. The protein is Small ribosomal subunit protein eS19 (rps19) of Myxine glutinosa (Atlantic hagfish).